Reading from the N-terminus, the 339-residue chain is MTFVRNAWYVAALPEELSEKPLGRTILDTPLALYRQPDGVVAALLDICPHRFAPLSDGILVNGHLQCPYHGLEFDGGGQCVHNPHGNGARPASLNVRSFPVVERDALIWIWPGDPALADPGAIPDFGCRVDPAYRTVGGYGHVDCNYKLLVDNLMDLGHAQYVHRANAQTDAFDRLEREVIVGDGEIQALMKIPGGTPSVLMAKFLRGANTPVDAWNDIRWNKVSAMLNFIAVAPEGTPKEQSIHSRGTHILTPETEASCHYFFGSSRNFGIDDPEMDGVLRSWQAQALVKEDKVVVEAIERRRAYVEANGIRPAMLSCDEAAVRVSREIEKLEQLEAA.

Residues 8-110 (WYVAALPEEL…VVERDALIWI (103 aa)) form the Rieske domain. [2Fe-2S] cluster is bound by residues cysteine 48, histidine 50, cysteine 67, and histidine 70. 2 residues coordinate Fe cation: histidine 159 and histidine 164. The 3,6-dichloro-2-methoxybenzoate site is built by asparagine 229, histidine 250, and tryptophan 284. Aspartate 293 contacts Fe cation.

Homotrimer. The dicamba O-demethylase multicomponent enzyme system is composed of an oxygenase component (DdmC) and an electron transfer component formed by a ferredoxin reductase (DdmA) and a ferredoxin (DdmB). In vitro, dicamba O-demethylase assays in which DdmA2 is substituted for DdmA1 demonstrate that the two enzymes possess nearly identical activities. [2Fe-2S] cluster is required as a cofactor.

The catalysed reaction is 3,6-dichloro-2-methoxybenzoate + 2 reduced [2Fe-2S]-[ferredoxin] + O2 + 2 H(+) = 3,6-dichlorosalicylate + formaldehyde + 2 oxidized [2Fe-2S]-[ferredoxin] + H2O. Activity enhanced by Fe(2+) and Mg(2+) ions. Its function is as follows. Component of the dicamba O-demethylase multicomponent enzyme system involved in the degradation of the herbicide dicamba. In vitro, catalyzes the O-demethylation of 2-methoxy-3,6-dichlorobenzoic acid (dicamba) to yield 3,6-dichlorosalicylic acid (DCSA) via an exocyclic monooxygenation. This is Dicamba O-demethylase, oxygenase component from Stenotrophomonas maltophilia (Pseudomonas maltophilia).